A 155-amino-acid chain; its full sequence is UPF0303 protein lp_3613 (155 aa).

This sequence belongs to the UPF0303 family.

The polypeptide is UPF0303 protein lp_3613 (Lactiplantibacillus plantarum (strain ATCC BAA-793 / NCIMB 8826 / WCFS1) (Lactobacillus plantarum)).